We begin with the raw amino-acid sequence, 141 residues long: MAIERTLSIIKPDAVAKNVIGKIYDRFESAGLKIIASRMAHLSQNEAEQFYGVHKDRPFFKDLVSFMISGPVMIQVLQGEGAIAKNRDLMGATDPKKADKGTIRADFADSIDANAVHGSDAPETAAVEVAFFFPGMNVFNR.

Lysine 11, phenylalanine 59, arginine 87, threonine 93, arginine 104, and asparagine 114 together coordinate ATP. Catalysis depends on histidine 117, which acts as the Pros-phosphohistidine intermediate.

The protein belongs to the NDK family. In terms of assembly, homotetramer. The cofactor is Mg(2+).

Its subcellular location is the cytoplasm. It carries out the reaction a 2'-deoxyribonucleoside 5'-diphosphate + ATP = a 2'-deoxyribonucleoside 5'-triphosphate + ADP. The catalysed reaction is a ribonucleoside 5'-diphosphate + ATP = a ribonucleoside 5'-triphosphate + ADP. Major role in the synthesis of nucleoside triphosphates other than ATP. The ATP gamma phosphate is transferred to the NDP beta phosphate via a ping-pong mechanism, using a phosphorylated active-site intermediate. The protein is Nucleoside diphosphate kinase of Polynucleobacter asymbioticus (strain DSM 18221 / CIP 109841 / QLW-P1DMWA-1) (Polynucleobacter necessarius subsp. asymbioticus).